The chain runs to 657 residues: MTVAHSHRFSTAVNPINISLLSKQLLQLGRTSNNSGTFSEISNQKELLVSSLISKLDDCINLNQIKQIHGHVLRKGLDQSCYILTKLIRTLTKLGVPMDPYARRVIEPVQFRNPFLWTAVIRGYAIEGKFDEAIAMYGCMRKEEITPVSFTFSALLKACGTMKDLNLGRQFHAQTFRLRGFCFVYVGNTMIDMYVKCESIDCARKVFDEMPERDVISWTELIAAYARVGNMECAAELFESLPTKDMVAWTAMVTGFAQNAKPQEALEYFDRMEKSGIRADEVTVAGYISACAQLGASKYADRAVQIAQKSGYSPSDHVVIGSALIDMYSKCGNVEEAVNVFMSMNNKNVFTYSSMILGLATHGRAQEALHLFHYMVTQTEIKPNTVTFVGALMACSHSGLVDQGRQVFDSMYQTFGVQPTRDHYTCMVDLLGRTGRLQEALELIKTMSVEPHGGVWGALLGACRIHNNPEIAEIAAEHLFELEPDIIGNYILLSNVYASAGDWGGVLRVRKLIKEKGLKKTPAVSWVVDKNGQMHKFFPGNLNHPMSNKIQDKLEELVERLTVLGYQPDLSSVPYDVSDNAKRLILIQHTEKLALAFSLLTTNRDSTITIMKNLRMCLDCHKFMRLASEVTGKVIIMRDNMRFHHFRSGDCSCGDFW.

PPR repeat units lie at residues 45 to 79, 80 to 112, 113 to 147, 148 to 178, 183 to 213, 214 to 244, 245 to 279, 280 to 314, 317 to 347, 348 to 383, 384 to 419, and 420 to 450; these read KELL…GLDQ, SCYI…VQFR, NPFL…EITP, VSFT…TFRL, FVYV…MPER, DVIS…LPTK, DMVA…GIRA, DEVT…GYSP, HVVI…MNNK, NVFT…EIKP, NTVT…GVQP, and TRDH…MSVE. A type E motif region spans residues 455–530; it reads VWGALLGACR…TPAVSWVVDK (76 aa). Residues 532-562 form a type E(+) motif region; the sequence is GQMHKFFPGNLNHPMSNKIQDKLEELVERLT. Residues 563-657 form a type DYW motif region; sequence VLGYQPDLSS…SGDCSCGDFW (95 aa).

This sequence belongs to the PPR family. PCMP-H subfamily.

In Arabidopsis thaliana (Mouse-ear cress), this protein is Pentatricopeptide repeat-containing protein At5g44230 (PCMP-H17).